The chain runs to 275 residues: Transcription factor Ovo-like 2 (275 aa).

Positions serine 15 to valine 101 are disordered. Composition is skewed to basic and acidic residues over residues serine 18–aspartate 29 and leucine 39–serine 49. A compositionally biased stretch (low complexity) spans glycine 56–alanine 76. The segment covering glutamate 80–glycine 89 has biased composition (acidic residues). C2H2-type zinc fingers lie at residues histidine 119–histidine 141, histidine 147–histidine 169, tyrosine 175–histidine 198, and tyrosine 214–histidine 237. Phosphoserine is present on serine 269.

It belongs to the krueppel C2H2-type zinc-finger protein family. In terms of assembly, interacts (via zinc-finger domains) with CEBPA (via bZIP domain); the interaction inhibits the transcription factor activity of CEBPA and is required to repress adipogenesis. Expressed in testis, ovary, heart and skeletal muscle. Expressed in the cornea, but absent from the corneal endothelium.

The protein localises to the nucleus. Zinc-finger transcription repressor factor. Plays a critical role in maintaining the identity of epithelial lineages by suppressing epithelial-to mesenchymal transition (EMT) mainly through the repression of ZEB1, an EMT inducer. Positively regulates neuronal differentiation. Suppresses cell cycling and terminal differentiation of keratinocytes by directly repressing MYC and NOTCH1. Important for the correct development of primordial germ cells in embryos. Plays dual functions in thermogenesis and adipogenesis to maintain energy balance. Essential for brown/beige adipose tissue-mediated thermogenesis, is necessary for the development of brown adipocytes. In white adipose tissues, limits adipogenesis by blocking CEBPA binding to its transcriptional targets and inhibiting its transcription factor activity. The protein is Transcription factor Ovo-like 2 of Homo sapiens (Human).